Here is a 139-residue protein sequence, read N- to C-terminus: Acidic phospholipase A2 DE-I (139 aa).

Residues 1–16 (MRTLWIMAVLLLGVEG) form the signal peptide. 7 cysteine pairs are disulfide-bonded: Cys42–Cys132, Cys44–Cys60, Cys59–Cys111, Cys65–Cys139, Cys66–Cys104, Cys73–Cys97, and Cys91–Cys102. The Ca(2+) site is built by Tyr43, Gly45, and Gly47. The active site involves His63. Asp64 contacts Ca(2+). Asp105 is a catalytic residue.

Requires Ca(2+) as cofactor. As to expression, expressed by the venom gland.

The protein localises to the secreted. It carries out the reaction a 1,2-diacyl-sn-glycero-3-phosphocholine + H2O = a 1-acyl-sn-glycero-3-phosphocholine + a fatty acid + H(+). Its function is as follows. Snake venom phospholipase A2 (PLA2) that inhibits the ADP- and collagen-induced human platelet aggregation. Exhibits high hydrolytic activities and preferred the anionic micelles to the zwitterionic micelles. PLA2 catalyzes the calcium-dependent hydrolysis of the 2-acyl groups in 3-sn-phosphoglycerides. In Ovophis okinavensis (Ryukyu Island pit viper), this protein is Acidic phospholipase A2 DE-I.